Reading from the N-terminus, the 23-residue chain is Profilin (23 aa).

The protein belongs to the profilin family. As to quaternary structure, occurs in many kinds of cells as a complex with monomeric actin in a 1:1 ratio.

It localises to the cytoplasm. It is found in the cytoskeleton. In terms of biological role, binds to actin and affects the structure of the cytoskeleton. At high concentrations, profilin prevents the polymerization of actin, whereas it enhances it at low concentrations. By binding to PIP2, it inhibits the formation of IP3 and DG. In Beta vulgaris (Sugar beet), this protein is Profilin.